The sequence spans 296 residues: Protoheme IX farnesyltransferase 1 (296 aa).

8 helical membrane-spanning segments follow: residues 14–34 (IVLLLVITAVTTMYAGDALSA), 41–61 (LWDYAHLMAAGALASAGSSAL), 86–106 (IGENIVLAYGLAISSAAVVYA), 108–128 (FLLNAPTAFFIALGIFSYVII), 141–161 (IVIGGIAGSAASWAGWTAATG), 165–185 (LLGFLIGFLVFVWTPSHFWCL), 230–250 (AFGMGLVYLVIAVASGGLMLV), and 274–294 (YLTIIFAAVALDAAFHYPFPF).

The protein belongs to the UbiA prenyltransferase family. Protoheme IX farnesyltransferase subfamily.

The protein localises to the cell membrane. It catalyses the reaction heme b + (2E,6E)-farnesyl diphosphate + H2O = Fe(II)-heme o + diphosphate. Its pathway is porphyrin-containing compound metabolism; heme O biosynthesis; heme O from protoheme: step 1/1. Functionally, converts heme B (protoheme IX) to heme O by substitution of the vinyl group on carbon 2 of heme B porphyrin ring with a hydroxyethyl farnesyl side group. This Cenarchaeum symbiosum (strain A) protein is Protoheme IX farnesyltransferase 1.